Reading from the N-terminus, the 307-residue chain is Putative S-adenosyl-L-methionine-dependent methyltransferase Mflv_5025 (307 aa).

S-adenosyl-L-methionine contacts are provided by residues Asp130 and 159 to 160 (DL).

Belongs to the UPF0677 family.

Its function is as follows. Exhibits S-adenosyl-L-methionine-dependent methyltransferase activity. The polypeptide is Putative S-adenosyl-L-methionine-dependent methyltransferase Mflv_5025 (Mycolicibacterium gilvum (strain PYR-GCK) (Mycobacterium gilvum (strain PYR-GCK))).